Here is a 341-residue protein sequence, read N- to C-terminus: Holliday junction branch migration complex subunit RuvB (341 aa).

The segment at 1–22 (MSETAGKGVTMPEIMQSSYPDE) is disordered. The segment at 4-193 (TAGKGVTMPE…FGIISRLEFY (190 aa)) is large ATPase domain (RuvB-L). ATP is bound by residues Ile-32, Arg-33, Gly-74, Lys-77, Thr-78, Thr-79, 140–142 (EDY), Arg-183, Tyr-193, and Arg-230. Thr-78 is a Mg(2+) binding site. The tract at residues 194 to 264 (TPEELSQIIL…LVNHALQKLD (71 aa)) is small ATPAse domain (RuvB-S). The segment at 267-341 (EKGLDQMDRK…KAYKHLNLTD (75 aa)) is head domain (RuvB-H). Residues Arg-322 and Arg-327 each coordinate DNA.

Belongs to the RuvB family. As to quaternary structure, homohexamer. Forms an RuvA(8)-RuvB(12)-Holliday junction (HJ) complex. HJ DNA is sandwiched between 2 RuvA tetramers; dsDNA enters through RuvA and exits via RuvB. An RuvB hexamer assembles on each DNA strand where it exits the tetramer. Each RuvB hexamer is contacted by two RuvA subunits (via domain III) on 2 adjacent RuvB subunits; this complex drives branch migration. In the full resolvosome a probable DNA-RuvA(4)-RuvB(12)-RuvC(2) complex forms which resolves the HJ.

Its subcellular location is the cytoplasm. It catalyses the reaction ATP + H2O = ADP + phosphate + H(+). Functionally, the RuvA-RuvB-RuvC complex processes Holliday junction (HJ) DNA during genetic recombination and DNA repair, while the RuvA-RuvB complex plays an important role in the rescue of blocked DNA replication forks via replication fork reversal (RFR). RuvA specifically binds to HJ cruciform DNA, conferring on it an open structure. The RuvB hexamer acts as an ATP-dependent pump, pulling dsDNA into and through the RuvAB complex. RuvB forms 2 homohexamers on either side of HJ DNA bound by 1 or 2 RuvA tetramers; 4 subunits per hexamer contact DNA at a time. Coordinated motions by a converter formed by DNA-disengaged RuvB subunits stimulates ATP hydrolysis and nucleotide exchange. Immobilization of the converter enables RuvB to convert the ATP-contained energy into a lever motion, pulling 2 nucleotides of DNA out of the RuvA tetramer per ATP hydrolyzed, thus driving DNA branch migration. The RuvB motors rotate together with the DNA substrate, which together with the progressing nucleotide cycle form the mechanistic basis for DNA recombination by continuous HJ branch migration. Branch migration allows RuvC to scan DNA until it finds its consensus sequence, where it cleaves and resolves cruciform DNA. The protein is Holliday junction branch migration complex subunit RuvB of Lawsonia intracellularis (strain PHE/MN1-00).